The sequence spans 548 residues: 5-epi-aristolochene synthase 3 (548 aa).

Positions 301, 305, 444, 448, and 452 each coordinate Mg(2+). The short motif at 301–305 (DDTFD) is the DDXXD motif element.

This sequence belongs to the terpene synthase family. Monomer. Requires Mg(2+) as cofactor. As to expression, expressed in roots, but not in shoots.

It is found in the cytoplasm. The enzyme catalyses (2E,6E)-farnesyl diphosphate = (+)-5-epi-aristolochene + diphosphate. It functions in the pathway secondary metabolite biosynthesis; terpenoid biosynthesis. Its function is as follows. Catalyzes the cyclization of trans,trans-farnesyl diphosphate (FPP) to the bicyclic intermediate 5-epi-aristolochene, initial step in the conversion of FPP to the sesquiterpenoid antifungal phytoalexin capsidiol. Produces germacrene A as an enzyme-bound intermediate that is not released by the enzyme, but is further cyclized to produce the bicyclic 5-epi-aristolochene. This is 5-epi-aristolochene synthase 3 from Nicotiana attenuata (Coyote tobacco).